Consider the following 799-residue polypeptide: Signal transducer and activator of transcription 5A (799 aa).

Position 90 is a phosphotyrosine (Tyr90). Ser128 is modified (phosphoserine). Residues Trp589 to Val686 enclose the SH2 domain. The residue at position 682 (Tyr682) is a Phosphotyrosine. At Tyr699 the chain carries Phosphotyrosine; by JAK2. The interval Asp778–Ser799 is disordered. A Phosphoserine modification is found at Ser785.

Belongs to the transcription factor STAT family. As to quaternary structure, forms a homodimer or a heterodimer with a related family member. Binds NR3C1. Interacts with NCOA1 and SOCS7. Interacts with ERBB4. Interacts with EBF4. Interacts with CD69. In terms of processing, ISGylated. Tyrosine phosphorylated in response to KITLG/SCF, IL2, IL3, IL7, IL15, CSF2/GMCSF, GH1, PRL, EPO and THPO. Activated KIT promotes phosphorylation on tyrosine residues and subsequent translocation to the nucleus. Tyrosine phosphorylated in response to constitutively activated FGFR1, FGFR2, FGFR3 and FGFR4. Tyrosine phosphorylation is required for DNA-binding activity and dimerization. Serine phosphorylation is also required for maximal transcriptional activity. Tyrosine phosphorylated in response to signaling via activated FLT3; wild-type FLT3 results in much weaker phosphorylation than constitutively activated mutant FLT3. Alternatively, can be phosphorylated by JAK2 at Tyr-699.

It localises to the cytoplasm. The protein resides in the nucleus. Its function is as follows. Carries out a dual function: signal transduction and activation of transcription. Mediates cellular responses to the cytokine KITLG/SCF and other growth factors. May mediate cellular responses to activated FGFR1, FGFR2, FGFR3 and FGFR4. Binds to the GAS element and activates PRL-induced transcription. Regulates the expression of milk proteins during lactation. This chain is Signal transducer and activator of transcription 5A (STAT5A), found in Sus scrofa (Pig).